The sequence spans 332 residues: Glycerol-3-phosphate dehydrogenase [NAD(P)+] (332 aa).

NADPH contacts are provided by Ser-11, Trp-12, Lys-32, and Lys-106. Sn-glycerol 3-phosphate is bound by residues Lys-106, Gly-137, and Ser-139. Ala-141 provides a ligand contact to NADPH. The sn-glycerol 3-phosphate site is built by Lys-192, Asp-245, Ser-255, Arg-256, and Asn-257. The active-site Proton acceptor is the Lys-192. Residue Arg-256 coordinates NADPH. NADPH contacts are provided by Val-280 and Glu-282.

The protein belongs to the NAD-dependent glycerol-3-phosphate dehydrogenase family.

It is found in the cytoplasm. The catalysed reaction is sn-glycerol 3-phosphate + NAD(+) = dihydroxyacetone phosphate + NADH + H(+). It catalyses the reaction sn-glycerol 3-phosphate + NADP(+) = dihydroxyacetone phosphate + NADPH + H(+). It functions in the pathway membrane lipid metabolism; glycerophospholipid metabolism. Its function is as follows. Catalyzes the reduction of the glycolytic intermediate dihydroxyacetone phosphate (DHAP) to sn-glycerol 3-phosphate (G3P), the key precursor for phospholipid synthesis. This Macrococcus caseolyticus (strain JCSC5402) (Macrococcoides caseolyticum) protein is Glycerol-3-phosphate dehydrogenase [NAD(P)+].